We begin with the raw amino-acid sequence, 73 residues long: Conotoxin CnIIIE (73 aa).

The signal sequence occupies residues 1–19 (MSKLGVLLTICLLLFPLTA). Positions 20–49 (LPMDGDQSVDRPAERMQDDISSEQYPLFNQ) are excised as a propeptide. Cystine bridges form between C53–C72, C54–C70, and C60–C73.

Belongs to the conotoxin M superfamily. In terms of tissue distribution, expressed by the venom duct.

Its subcellular location is the secreted. Its function is as follows. Shows a paralytic effect in fish. The protein is Conotoxin CnIIIE of Conus consors (Singed cone).